A 768-amino-acid polypeptide reads, in one-letter code: P-selectin (768 aa).

An N-terminal signal peptide occupies residues 1–41 (MAGCPKGSWTPRLRSVILGGAQLIWFSALISELVNQKEVAA). Over 42–709 (WTYNYSTKAY…QAGTLTIQEA (668 aa)) the chain is Extracellular. One can recognise a C-type lectin domain in the interval 58–158 (VFCRRHFTDL…PCFKRKRALC (101 aa)). 21 disulfide bridges follow: C60/C158, C131/C150, C163/C174, C168/C183, C185/C194, C200/C244, C230/C257, C262/C306, C292/C319, C324/C368, C354/C381, C386/C430, C416/C443, C448/C492, C478/C505, C510/C554, C540/C567, C580/C624, C610/C637, C642/C686, and C672/C699. Residues E121, N123, and N124 each coordinate Ca(2+). Position 123 (N123) interacts with a carbohydrate. A carbohydrate is bound by residues E133 and N146. Residues N146 and D147 each contribute to the Ca(2+) site. One can recognise an EGF-like domain in the interval 159-195 (YTASCQDMSCSNQGECIETIGSYTCSCYPGFYGPECE). Sushi domains follow at residues 198-259 (KECG…KCDA), 260-321 (VQCQ…TCEA), 322-383 (IACE…FCEA), 384-445 (LQCP…ECQA), 446-507 (VSCA…TCEA), 508-569 (IKCP…TCKG), 578-639 (VRCP…MCRA), and 640-701 (VKCS…TCQA). N-linked (GlcNAc...) asparagine glycosylation occurs at N398. N-linked (GlcNAc...) asparagine glycosylation occurs at N603. N654, N661, and N679 each carry an N-linked (GlcNAc...) asparagine glycan. Residues 710–733 (LTYLGGAVASTTGLAVGGTLLALL) traverse the membrane as a helical segment. Residues 734–768 (RKRLRKKDDGKCPLNPHSHLGTYGVFTNAAYDPTP) lie on the Cytoplasmic side of the membrane. C745 is lipidated: S-palmitoyl cysteine; alternate. C745 carries the S-stearoyl cysteine; alternate lipid modification. Positions 756–759 (YGVF) match the Endocytosis signal motif. Positions 759–768 (FTNAAYDPTP) are interaction with SNX17.

It belongs to the selectin/LECAM family. Interacts with SNX17. Interacts with SELPLG/PSGL1 and PODXL2 and mediates neutrophil adhesion and leukocyte rolling. This interaction requires the sialyl-Lewis X epitope of SELPLG and PODXL2, and specific tyrosine sulfation on SELPLG. Interacts (via C-type lectin domain) with alpha-IIb/beta3 integrin ITGA2B:ITGB3 and alpha-V/beta-3 integrin ITGAV:ITGB3. Interacts with alpha5/beta1 integrin ITGA5:ITGB1 and alpha4/beta1 integrin ITGA4:ITGB. Stored in the alpha-granules of platelets and Weibel-Palade bodies of endothelial cells. Upon cell activation by agonists, P-selectin is transported rapidly to the cell surface.

Its subcellular location is the cell membrane. Ca(2+)-dependent receptor for myeloid cells that binds to carbohydrates on neutrophils and monocytes. Mediates the interaction of activated endothelial cells or platelets with leukocytes. The ligand recognized is sialyl-Lewis X. Mediates rapid rolling of leukocyte rolling over vascular surfaces during the initial steps in inflammation through interaction with SELPLG. Mediates cell-cell interactions and cell adhesion via the interaction with integrin alpha-IIb/beta3 (ITGA2B:ITGB3) and integrin alpha-V/beta-3 (ITGAV:ITGB3). This is P-selectin (Selp) from Mus musculus (Mouse).